The primary structure comprises 445 residues: Glutamate--tRNA ligase 2 (445 aa).

The 'HIGH' region motif lies at 10 to 20 (PSPTGRLHVGN). The 'KMSKS' region motif lies at 241–245 (ALSKR). ATP is bound at residue K244.

This sequence belongs to the class-I aminoacyl-tRNA synthetase family. Glutamate--tRNA ligase type 1 subfamily. In terms of assembly, monomer.

It localises to the cytoplasm. The catalysed reaction is tRNA(Glu) + L-glutamate + ATP = L-glutamyl-tRNA(Glu) + AMP + diphosphate. In terms of biological role, catalyzes the attachment of glutamate to tRNA(Glu) in a two-step reaction: glutamate is first activated by ATP to form Glu-AMP and then transferred to the acceptor end of tRNA(Glu). The polypeptide is Glutamate--tRNA ligase 2 (Hyphomonas neptunium (strain ATCC 15444)).